We begin with the raw amino-acid sequence, 402 residues long: Thyroid hormone receptor alpha (402 aa).

A disordered region spans residues 1 to 22 (MEQKPSTLDPLSEPEDTRWLDG). Residues 1 to 50 (MEQKPSTLDPLSEPEDTRWLDGKRKRKSSQCLVKSSMSGYIPSYLDKDEQ) form a modulating region. Ser12 carries the post-translational modification Phosphoserine; by CK2. Ser28 is modified (phosphoserine). 8 residues coordinate Zn(2+): Cys51, Cys54, Cys68, Cys71, Cys89, Cys95, Cys105, and Cys108. NR C4-type zinc fingers lie at residues 51-71 (CVVCGDKATGYHYRCITCAGC) and 89-113 (CKYDGCCVIDKITRNQCQLCRFKKC). The nuclear receptor DNA-binding region spans 51 to 125 (CVVCGDKATG…VGMAMDLVLY (75 aa)). The region spanning 161–402 (EEWELIHVVT…ELFPPLFLEV (242 aa)) is the NR LBD domain. 3,3',5-triiodo-L-thyronine contacts are provided by Arg226 and Ser275.

This sequence belongs to the nuclear hormone receptor family. NR1 subfamily. Probably interacts with SFPQ.

The protein localises to the nucleus. Nuclear hormone receptor that can act as a repressor or activator of transcription. High affinity receptor for thyroid hormones, including triiodothyronine and thyroxine. The sequence is that of Thyroid hormone receptor alpha (THRA) from Pygoscelis adeliae (Adelie penguin).